Reading from the N-terminus, the 391-residue chain is Digeranylgeranylglycerophospholipid reductase (391 aa).

FAD contacts are provided by Gly13, Glu32, Cys43, Ala44, Gly46, Arg97, Ala121, Asp277, Gly289, and Ile290.

This sequence belongs to the geranylgeranyl reductase family. DGGGPL reductase subfamily. FAD serves as cofactor.

It catalyses the reaction a 2,3-bis-O-phytanyl-sn-glycerol 1-phospholipid + 8 oxidized 2[4Fe-4S]-[ferredoxin] = a 2,3-bis-O-(geranylgeranyl)-sn-glycerol 1-phospholipid + 8 reduced 2[4Fe-4S]-[ferredoxin] + 16 H(+). It carries out the reaction 2,3-bis-O-(phytanyl)-sn-glycerol 1-phosphate + 8 oxidized 2[4Fe-4S]-[ferredoxin] = 2,3-bis-O-(geranylgeranyl)-sn-glycerol 1-phosphate + 8 reduced 2[4Fe-4S]-[ferredoxin] + 16 H(+). The catalysed reaction is a 2,3-bis-O-phytanyl-sn-glycerol 1-phospholipid + 8 A = a 2,3-bis-O-(geranylgeranyl)-sn-glycerol 1-phospholipid + 8 AH2. The enzyme catalyses CDP-2,3-bis-O-(geranylgeranyl)-sn-glycerol + 8 AH2 = CDP-2,3-bis-O-(phytanyl)-sn-glycerol + 8 A. It catalyses the reaction archaetidylserine + 8 AH2 = 2,3-bis-O-phytanyl-sn-glycero-3-phospho-L-serine + 8 A. It functions in the pathway membrane lipid metabolism; glycerophospholipid metabolism. Its function is as follows. Is involved in the reduction of 2,3-digeranylgeranylglycerophospholipids (unsaturated archaeols) into 2,3-diphytanylglycerophospholipids (saturated archaeols) in the biosynthesis of archaeal membrane lipids. Catalyzes the formation of archaetidic acid (2,3-di-O-phytanyl-sn-glyceryl phosphate) from 2,3-di-O-geranylgeranylglyceryl phosphate (DGGGP) via the hydrogenation of each double bond of the isoprenoid chains. Is also probably able to reduce double bonds of geranyl groups in CDP-2,3-bis-O-(geranylgeranyl)-sn-glycerol and archaetidylserine, thus acting at various stages in the biosynthesis of archaeal membrane lipids. The polypeptide is Digeranylgeranylglycerophospholipid reductase (Methanothrix thermoacetophila (strain DSM 6194 / JCM 14653 / NBRC 101360 / PT) (Methanosaeta thermophila)).